Reading from the N-terminus, the 289-residue chain is 4-diphosphocytidyl-2-C-methyl-D-erythritol kinase (289 aa).

Residue lysine 15 is part of the active site. 100–110 (PVSAGLAGGSA) contacts ATP. Aspartate 140 is a catalytic residue.

Belongs to the GHMP kinase family. IspE subfamily.

The catalysed reaction is 4-CDP-2-C-methyl-D-erythritol + ATP = 4-CDP-2-C-methyl-D-erythritol 2-phosphate + ADP + H(+). Its pathway is isoprenoid biosynthesis; isopentenyl diphosphate biosynthesis via DXP pathway; isopentenyl diphosphate from 1-deoxy-D-xylulose 5-phosphate: step 3/6. Its function is as follows. Catalyzes the phosphorylation of the position 2 hydroxy group of 4-diphosphocytidyl-2C-methyl-D-erythritol. The sequence is that of 4-diphosphocytidyl-2-C-methyl-D-erythritol kinase from Anaplasma marginale (strain Florida).